Consider the following 234-residue polypeptide: Ribose-5-phosphate isomerase A (234 aa).

Residues 34 to 37 (TGST), 90 to 93 (DGAD), and 103 to 106 (KGGG) each bind substrate. Glutamate 112 acts as the Proton acceptor in catalysis. Lysine 130 contacts substrate.

The protein belongs to the ribose 5-phosphate isomerase family. As to quaternary structure, homodimer.

The catalysed reaction is aldehydo-D-ribose 5-phosphate = D-ribulose 5-phosphate. Its pathway is carbohydrate degradation; pentose phosphate pathway; D-ribose 5-phosphate from D-ribulose 5-phosphate (non-oxidative stage): step 1/1. Its function is as follows. Catalyzes the reversible conversion of ribose-5-phosphate to ribulose 5-phosphate. The polypeptide is Ribose-5-phosphate isomerase A (Methanosarcina acetivorans (strain ATCC 35395 / DSM 2834 / JCM 12185 / C2A)).